The primary structure comprises 328 residues: Tetraacyldisaccharide 4'-kinase (328 aa).

59 to 66 is an ATP binding site; that stretch reads TAGGNGKT.

Belongs to the LpxK family.

It carries out the reaction a lipid A disaccharide + ATP = a lipid IVA + ADP + H(+). It participates in glycolipid biosynthesis; lipid IV(A) biosynthesis; lipid IV(A) from (3R)-3-hydroxytetradecanoyl-[acyl-carrier-protein] and UDP-N-acetyl-alpha-D-glucosamine: step 6/6. Its function is as follows. Transfers the gamma-phosphate of ATP to the 4'-position of a tetraacyldisaccharide 1-phosphate intermediate (termed DS-1-P) to form tetraacyldisaccharide 1,4'-bis-phosphate (lipid IVA). The sequence is that of Tetraacyldisaccharide 4'-kinase from Aliivibrio fischeri (strain ATCC 700601 / ES114) (Vibrio fischeri).